The following is a 1366-amino-acid chain: DNA-directed RNA polymerase subunit beta (1366 aa).

Belongs to the RNA polymerase beta chain family. As to quaternary structure, the RNAP catalytic core consists of 2 alpha, 1 beta, 1 beta' and 1 omega subunit. When a sigma factor is associated with the core the holoenzyme is formed, which can initiate transcription.

The enzyme catalyses RNA(n) + a ribonucleoside 5'-triphosphate = RNA(n+1) + diphosphate. DNA-dependent RNA polymerase catalyzes the transcription of DNA into RNA using the four ribonucleoside triphosphates as substrates. In Polynucleobacter necessarius subsp. necessarius (strain STIR1), this protein is DNA-directed RNA polymerase subunit beta.